A 299-amino-acid polypeptide reads, in one-letter code: dTDP-4-dehydrorhamnose reductase (299 aa).

NADH-binding positions include 10 to 12, aspartate 30, 39 to 40, and 63 to 65; these read GQV, DF, and AHT. 11–12 serves as a coordination point for NADPH; sequence QV. NADPH-binding positions include 39–40, 63–65, and tyrosine 102; these read DF and AHT. DTDP-beta-L-rhamnose is bound at residue 104 to 105; that stretch reads TD. Tyrosine 128 and lysine 132 together coordinate NADH. Positions 128 and 132 each coordinate NADPH. Tyrosine 128 (proton donor/acceptor) is an active-site residue. Tryptophan 153 contributes to the dTDP-beta-L-rhamnose binding site.

This sequence belongs to the dTDP-4-dehydrorhamnose reductase family. As to quaternary structure, homodimer. Mg(2+) is required as a cofactor.

It catalyses the reaction dTDP-beta-L-rhamnose + NADP(+) = dTDP-4-dehydro-beta-L-rhamnose + NADPH + H(+). It functions in the pathway carbohydrate biosynthesis; dTDP-L-rhamnose biosynthesis. It participates in bacterial outer membrane biogenesis; LPS O-antigen biosynthesis. In terms of biological role, involved in the biosynthesis of the dTDP-L-rhamnose which is an important component of lipopolysaccharide (LPS). Catalyzes the reduction of dTDP-6-deoxy-L-lyxo-4-hexulose to yield dTDP-L-rhamnose. RmlD uses NADH and NADPH nearly equally well. This Shigella flexneri protein is dTDP-4-dehydrorhamnose reductase.